Here is a 357-residue protein sequence, read N- to C-terminus: Protein BUR2 (357 aa).

As to quaternary structure, belongs to the BUR kinase complex.

Its subcellular location is the nucleus. Functionally, component of the BUR kinase complex involved in transcription regulation. This complex phosphorylates the UBC2/RAD6 ubiquitin-conjugating enzyme (E2), leading to monoubiquitination of histone H2B and the silencing of telomeric-associated genes. Also required for histone H3 methylation. Necessary for the recovery from pheromone-induced growth arrest in the cell cycle G1 phase. The kinase activity of the complex requires the presence of BUR2. Overexpression of BUR2 interferes with mitotic chromosome segregation. This is Protein BUR2 (BUR2) from Candida glabrata (strain ATCC 2001 / BCRC 20586 / JCM 3761 / NBRC 0622 / NRRL Y-65 / CBS 138) (Yeast).